The chain runs to 66 residues: MPGLQLKKRPLSRYLKDYKHGQTHCSHCHKQLDRMALVFRGQIINKEAIAGMDQPIDDQVWSKLQH.

Functionally, may regulate sigma factor activity. The protein is Protein FliZ (fliZ) of Yersinia enterocolitica.